A 415-amino-acid chain; its full sequence is Secernin-2 (415 aa).

C8 is an active-site residue.

This sequence belongs to the peptidase C69 family. Secernin subfamily.

This chain is Secernin-2 (scrn2), found in Danio rerio (Zebrafish).